A 380-amino-acid chain; its full sequence is Tubulin-like protein CetZ (380 aa).

Residues 10–14 (QCGTK), 103–105 (GTG), E136, N163, and N181 each bind GTP. Residues 359-380 (PSLEATGSDDPEGFAEYREVSR) form a disordered region.

The protein belongs to the CetZ family.

It localises to the cytoplasm. Its function is as follows. Involved in cell shape control. In Thermococcus kodakarensis (strain ATCC BAA-918 / JCM 12380 / KOD1) (Pyrococcus kodakaraensis (strain KOD1)), this protein is Tubulin-like protein CetZ.